The primary structure comprises 442 residues: tRNA(Ile)-lysidine synthase (442 aa).

27-32 provides a ligand contact to ATP; it reads SGGLDS.

It belongs to the tRNA(Ile)-lysidine synthase family.

Its subcellular location is the cytoplasm. It carries out the reaction cytidine(34) in tRNA(Ile2) + L-lysine + ATP = lysidine(34) in tRNA(Ile2) + AMP + diphosphate + H(+). Ligates lysine onto the cytidine present at position 34 of the AUA codon-specific tRNA(Ile) that contains the anticodon CAU, in an ATP-dependent manner. Cytidine is converted to lysidine, thus changing the amino acid specificity of the tRNA from methionine to isoleucine. The sequence is that of tRNA(Ile)-lysidine synthase from Photorhabdus laumondii subsp. laumondii (strain DSM 15139 / CIP 105565 / TT01) (Photorhabdus luminescens subsp. laumondii).